A 120-amino-acid chain; its full sequence is Large ribosomal subunit protein uL18 (120 aa).

Belongs to the universal ribosomal protein uL18 family. As to quaternary structure, part of the 50S ribosomal subunit; part of the 5S rRNA/L5/L18/L25 subcomplex. Contacts the 5S and 23S rRNAs.

Its function is as follows. This is one of the proteins that bind and probably mediate the attachment of the 5S RNA into the large ribosomal subunit, where it forms part of the central protuberance. This is Large ribosomal subunit protein uL18 from Chloroflexus aurantiacus (strain ATCC 29364 / DSM 637 / Y-400-fl).